We begin with the raw amino-acid sequence, 396 residues long: Elongation factor Tu 1 (396 aa).

One can recognise a tr-type G domain in the interval 10–206 (KPHVNVGTIG…ALDTYIPTPE (197 aa)). The interval 19 to 26 (GHVDHGKT) is G1. Residue 19–26 (GHVDHGKT) coordinates GTP. T26 lines the Mg(2+) pocket. Positions 60–64 (GITIN) are G2. The segment at 81 to 84 (DCPG) is G3. GTP-binding positions include 81-85 (DCPGH) and 136-139 (NKAD). Residues 136 to 139 (NKAD) are G4. Residues 174 to 176 (SAK) form a G5 region.

The protein belongs to the TRAFAC class translation factor GTPase superfamily. Classic translation factor GTPase family. EF-Tu/EF-1A subfamily. In terms of assembly, monomer.

Its subcellular location is the cytoplasm. The catalysed reaction is GTP + H2O = GDP + phosphate + H(+). Functionally, GTP hydrolase that promotes the GTP-dependent binding of aminoacyl-tRNA to the A-site of ribosomes during protein biosynthesis. This Methylobacillus flagellatus (strain ATCC 51484 / DSM 6875 / VKM B-1610 / KT) protein is Elongation factor Tu 1.